The following is a 146-amino-acid chain: Transcription antitermination protein NusB (146 aa).

It belongs to the NusB family.

Functionally, involved in transcription antitermination. Required for transcription of ribosomal RNA (rRNA) genes. Binds specifically to the boxA antiterminator sequence of the ribosomal RNA (rrn) operons. The chain is Transcription antitermination protein NusB from Koribacter versatilis (strain Ellin345).